Here is an 852-residue protein sequence, read N- to C-terminus: MSSVSPIQIPSRLPLLLTHEGVLLPGSTMRTSVDSARNLQLVRSRLLKGTSLQSTILGVIPNTPDPASDAQDLPPLHRIGTAALAVQVVGSNWPKPHYTLLITGLCRFQIVQVLKEKPYPIAEVEQLDRLEEFPSTCKMREELGELSEQFYKYAVQLVEMLDMSVPAVAKLRRLLDSLPREALPDILTSIIRTSNKEKLQILDAVSLEERFKMTIPLLVRQIEGLKLLQKTRKPKQDDDKRVIAIRPIRRITHISGTLEDEDEDEDNDDIVMLEKEIRTSSMPEQAHKVCVKEIKRLKKMPQSMPEYALTRNYLELMVELPWNKSTTDRLDIRAARILLDNDHYAMEKLKKRVLEYLVVRQLKNNLKGPILCFVGPPGVGKTSVGRLVAKTLGREFHRIALGGVCDQSDIRGHRRTYVGSMPGRIINGLKTVGVNNPVFLLDEVDKLGKSLQGDPAAALLEVLDPEQNHNFTDHYLNVAFDLSRVLFIATANTTATIPAALLDRMEIIQVPGYTQEEKIEIAHRHLIPKQLEQHGLTPQQIQIPQVTTLDIITRYTREAGVRSLDRKLGAICRAVAVKVAEGQHKEAKLDRSDVTEREGCREHILEDEKPESISDTTDLALPPEMPILIDFHALKDILGPPMYEMEVSQRLSQPGVAIGLAWTPLGGEIMFVEASRMDGEGQLTLTGQLGDVMKESAHLAISWLRSNAKKYQLTNAFGSFDLLDNTDIHLHFPAGAVTKDGPSAGVTIVTCLASLFSERLVRSDVAMTGEITLRGLVLPVGGIKDKVLAAHRAGLKQVIIPRRNEKDLEGIPGNVRQDLSFVTASCLDEVLNAAFDGGFTVKTRPGLLNSKL.

At serine 2 the chain carries N-acetylserine. The region spanning 13 to 222 is the Lon N-terminal domain; sequence LPLLLTHEGV…MTIPLLVRQI (210 aa). Position 375 to 382 (375 to 382) interacts with ATP; that stretch reads GPPGVGKT. The Lon proteolytic domain occupies 651-837; that stretch reads LSQPGVAIGL…DEVLNAAFDG (187 aa). Active-site residues include serine 743 and lysine 786. The Microbody targeting signal motif lies at 850–852; the sequence is SKL.

The protein belongs to the peptidase S16 family. In terms of assembly, interacts with PEX5. Interacts with TYSND1. May interact with enzymes involved in beta-oxidation of fatty acids, including ACOX1/AOX.

It localises to the peroxisome matrix. The enzyme catalyses Hydrolysis of proteins in presence of ATP.. Its function is as follows. ATP-dependent serine protease that mediates the selective degradation of misfolded and unassembled polypeptides in the peroxisomal matrix. Necessary for type 2 peroxisome targeting signal (PTS2)-containing protein processing and facilitates peroxisome matrix protein import. May indirectly regulate peroxisomal fatty acid beta-oxidation through degradation of the self-processed forms of TYSND1. The sequence is that of Lon protease homolog 2, peroxisomal from Pongo abelii (Sumatran orangutan).